The chain runs to 384 residues: F-box only protein 5-B (384 aa).

Disordered regions lie at residues 1 to 20 (MMCG…KSSA) and 79 to 106 (DEEN…ETDS). Over residues 9 to 19 (PSPKKLLSKSS) the composition is skewed to low complexity. Over residues 83-99 (SSLQDSGYSSILQNDSP) the composition is skewed to polar residues. In terms of domain architecture, F-box spans 191–238 (AELFHRDFKHLLTKILRHLNAMDLINVIGVSTTWRKILQKDNWAYNTY). A ZBR-type zinc finger spans residues 311 to 359 (SLKACVDCGSPAKYDSYLHRAICTRESCKLDFCTLCSCKYHSSKSCLIS). Residues Cys-315, Cys-318, Cys-333, Cys-338, Cys-343, Cys-346, His-351, and Cys-356 each coordinate Zn(2+).

Part of a SCF (SKP1-cullin-F-box) protein ligase complex. Interacts with btrc. Interacts with skp1. Interacts with cdc20. Interacts with pin1; stabilizes fbxo5 by preventing its association with btrc in an isomerization-dependent pathway; this interaction is present during G2 phase and prevents fbxo5 degradation. Interacts with plk1. Post-translationally, proteolysed; proteolysis is induced by both cyclin B-cdk1 and cyclin A-cdk1/2 complex through probable phosphorylation. Proteolysis is inhibited by pin1 during G2.

The protein localises to the nucleus. The protein resides in the cytoplasm. It is found in the cytoskeleton. It localises to the spindle. Its subcellular location is the microtubule organizing center. The protein localises to the centrosome. It functions in the pathway protein modification; protein ubiquitination. Regulates progression through early mitosis by inhibiting the anaphase promoting complex/cyclosome (APC). Binds to the APC activators cdc20 to prevent APC activation. Can also bind directly to the APC to inhibit substrate-binding. Required to arrest unfertilized eggs at metaphase of meiosis II, by preventing their release from metaphase of meiosis II, through inhibition of APC-dependent cyclin B destruction leading to stabilization of cyclin B-cdk1 complex activity. The protein is F-box only protein 5-B (fbxo5-b) of Xenopus laevis (African clawed frog).